We begin with the raw amino-acid sequence, 405 residues long: Growth/differentiation factor 11 (405 aa).

The first 24 residues, 1 to 24 (MVLAAPLLLGFLLLALELRPRGEA), serve as a signal peptide directing secretion. A propeptide spanning residues 25–296 (AEGPAAAAAA…VLENTKRSRR (272 aa)) is cleaved from the precursor. N-linked (GlcNAc...) asparagine glycosylation is present at Asn92. 4 cysteine pairs are disulfide-bonded: Cys302/Cys312, Cys311/Cys370, Cys339/Cys402, and Cys343/Cys404.

This sequence belongs to the TGF-beta family. As to quaternary structure, homodimer; disulfide-linked. Interacts directly with ACVR2B. Interacts directly with ACVR2A. Interacts with ACVR1B, TGFBR1 and ACVR1C in an ACVR2B-dependent manner. Interacts with FST isoform 2/FS288. In terms of processing, synthesized as large precursor molecule that undergoes proteolytic cleavage by furin-like proteases. This produces an inactive form consisting of the mature C-terminal portion non-covalently bound to its cleaved N-terminal propeptide. Activation of the mature form requires additional cleavage of the propeptide by a tolloid-like metalloproteinase.

The protein localises to the secreted. Functionally, secreted signal that acts globally to regulate anterior/posterior axial patterning during development. May play critical roles in patterning both mesodermal and neural tissues. It is required for proper vertebral patterning and orofacial development. Signals through activin receptors type-2, ACVR2A and ACVR2B, and activin receptors type-1, ACVR1B, ACVR1C and TGFBR1 leading to the phosphorylation of SMAD2 and SMAD3. The polypeptide is Growth/differentiation factor 11 (Gdf11) (Rattus norvegicus (Rat)).